The sequence spans 317 residues: Beta-ketoacyl-[acyl-carrier-protein] synthase III (317 aa).

Residues cysteine 112 and histidine 244 contribute to the active site. The ACP-binding stretch occupies residues 245-249; the sequence is QANIR. Asparagine 274 is a catalytic residue.

The protein belongs to the thiolase-like superfamily. FabH family. Homodimer.

It localises to the cytoplasm. The catalysed reaction is malonyl-[ACP] + acetyl-CoA + H(+) = 3-oxobutanoyl-[ACP] + CO2 + CoA. The protein operates within lipid metabolism; fatty acid biosynthesis. In terms of biological role, catalyzes the condensation reaction of fatty acid synthesis by the addition to an acyl acceptor of two carbons from malonyl-ACP. Catalyzes the first condensation reaction which initiates fatty acid synthesis and may therefore play a role in governing the total rate of fatty acid production. Possesses both acetoacetyl-ACP synthase and acetyl transacylase activities. Its substrate specificity determines the biosynthesis of branched-chain and/or straight-chain of fatty acids. This is Beta-ketoacyl-[acyl-carrier-protein] synthase III from Rickettsia felis (strain ATCC VR-1525 / URRWXCal2) (Rickettsia azadi).